Reading from the N-terminus, the 228-residue chain is Probable septum site-determining protein MinC (228 aa).

It belongs to the MinC family. In terms of assembly, interacts with MinD and FtsZ.

Cell division inhibitor that blocks the formation of polar Z ring septums. Rapidly oscillates between the poles of the cell to destabilize FtsZ filaments that have formed before they mature into polar Z rings. Prevents FtsZ polymerization. This chain is Probable septum site-determining protein MinC, found in Bacillus mycoides (strain KBAB4) (Bacillus weihenstephanensis).